Consider the following 82-residue polypeptide: Small ribosomal subunit protein eS21 (82 aa).

The protein belongs to the eukaryotic ribosomal protein eS21 family.

The protein is Small ribosomal subunit protein eS21 (RPS21) of Oryza sativa subsp. japonica (Rice).